Reading from the N-terminus, the 104-residue chain is Transcription factor ILI1 (104 aa).

The span at 1 to 11 (MSSSRRSRSRR) shows a compositional bias: basic residues. The tract at residues 1-27 (MSSSRRSRSRRAGSSVPSSSSSSRTSI) is disordered. A compositionally biased stretch (low complexity) spans 12 to 27 (AGSSVPSSSSSSRTSI). One can recognise a bHLH domain in the interval 16–71 (VPSSSSSSRTSISEDQIAELLSKLQALLPESQARNGAHRGSAARVLQETCSYIRSL).

The protein belongs to the bHLH protein family. Interacts with IBH1.

Functionally, atypical and probable non DNA-binding bHLH transcription factor that acts as a positive regulator of cell elongation and plant development. Binds the transcription repressor IBH1 and forms a heterodimer of antagonistic bHLH transcription factors that function downstream of BZR1 to mediate brassinosteroid regulation of cell elongation and lamina inclination. In Oryza sativa subsp. indica (Rice), this protein is Transcription factor ILI1 (ILI1).